The sequence spans 437 residues: UDP-N-acetylmuramoylalanine--D-glutamate ligase (437 aa).

ATP is bound at residue 115–121; that stretch reads GSNGKST.

Belongs to the MurCDEF family.

Its subcellular location is the cytoplasm. It catalyses the reaction UDP-N-acetyl-alpha-D-muramoyl-L-alanine + D-glutamate + ATP = UDP-N-acetyl-alpha-D-muramoyl-L-alanyl-D-glutamate + ADP + phosphate + H(+). The protein operates within cell wall biogenesis; peptidoglycan biosynthesis. Cell wall formation. Catalyzes the addition of glutamate to the nucleotide precursor UDP-N-acetylmuramoyl-L-alanine (UMA). The chain is UDP-N-acetylmuramoylalanine--D-glutamate ligase from Vibrio parahaemolyticus serotype O3:K6 (strain RIMD 2210633).